The following is a 250-amino-acid chain: Ribosomal RNA small subunit methyltransferase J (250 aa).

Residues 101–102, 117–118, 153–154, and Asp171 each bind S-adenosyl-L-methionine; these read RD, ER, and SS.

The protein belongs to the methyltransferase superfamily. RsmJ family.

The protein localises to the cytoplasm. The enzyme catalyses guanosine(1516) in 16S rRNA + S-adenosyl-L-methionine = N(2)-methylguanosine(1516) in 16S rRNA + S-adenosyl-L-homocysteine + H(+). Specifically methylates the guanosine in position 1516 of 16S rRNA. The chain is Ribosomal RNA small subunit methyltransferase J from Shigella flexneri serotype 5b (strain 8401).